The following is a 686-amino-acid chain: Acyl-CoA synthetase short-chain family member 3, mitochondrial (686 aa).

A mitochondrion-targeting transit peptide spans 1–29; that stretch reads MKPSWLQCHKVTSAGGLGGPLPGSSPARG. CoA is bound at residue 227-230; that stretch reads EPGR. ATP-binding positions include 425–427 and 446–451; these read GER and DHWWQT. Position 518 is an N6-succinyllysine (K518). K524 is modified (N6-acetyllysine). ATP is bound by residues D539, R554, and R565. Position 624 (R624) interacts with CoA.

It belongs to the ATP-dependent AMP-binding enzyme family.

The protein localises to the mitochondrion matrix. It catalyses the reaction acetate + ATP + CoA = acetyl-CoA + AMP + diphosphate. The catalysed reaction is propanoate + ATP + CoA = propanoyl-CoA + AMP + diphosphate. It carries out the reaction butanoate + ATP + CoA = butanoyl-CoA + AMP + diphosphate. In terms of biological role, catalyzes the synthesis of acetyl-CoA from short-chain fatty acids. Propionate is the preferred substrate but can also utilize acetate and butyrate with a much lower affinity. This Pongo abelii (Sumatran orangutan) protein is Acyl-CoA synthetase short-chain family member 3, mitochondrial (ACSS3).